A 758-amino-acid polypeptide reads, in one-letter code: MEIDGNTLVFIIVILFLFFSSPGGDGVSSQYEFNQLQRLKQQFRTEHNTFVNMTYTDSFRNITGLKLSYQDMLNNPLQNATYPLPGKDYDRWFPNQNYMVLPNDVIEAINTEVWNTSNDDASNLFPPNITSTLLGKIDLVSNNKYEKIRMPVPRFYEPATDFSEDIPPEGETYWSEWPSYGELHNVSFQHGEIAIQISHMSNLQDNNNYLRRNFINKKNDRWKLLNLQIDFSDKAEKEKHSIYSKAVYDIQRGRILSISQSSKFHSLFALPHYMSFQNDYNEKIFNDVKELVDEFWNFTDYTDVMTMKDVQDAYNNANFKCEYLIFLQLEPWNQYTRDQIKLIDDELNWPLGRPANLSSLPPINVVSGLLYSPDCGVRLGLHNVKGTRYELKIMSIRKHLLFGIALFAAQIYLLLTQMHHTNTPSMVNKISFYCFSMINLVDGSLATLYFVAASVVPELYLPLVISAFSCFILASIFEIRYLISIYASQVNEQNVGIINLLRGNTGTYDENRPRPAFIPDEGSIGGSLYGRFFFMLIIFTFLILSSTSWPRQLRMVFEYILIFILNSYWIPQIFRNAVKGIPSRRERARSSIGGNRSQNKMPLLWSFVIGTTIIRSLPVVYVFTYSSNVFRHHKDVHFVVFLSLWLLFQISILYSQDVLGSRWFLPKHTIPDGYSYFKPLSNEYISEHGGGTAEHTVDCAICMSDVPIYIEEIPETHKVDQHSYMVTPCNHVFHTSCLENWMNYKLQCPVCRSPLPPL.

The N-terminal stretch at M1–G26 is a signal peptide. At V27 to K398 the chain is on the lumenal side. The helical transmembrane segment at H399–H419 threads the bilayer. At H420 to S431 the chain is on the cytoplasmic side. Residues F432–A452 traverse the membrane as a helical segment. Topologically, residues A453–E458 are lumenal. Residues L459–I479 form a helical membrane-spanning segment. The Cytoplasmic portion of the chain corresponds to R480 to S523. Residues I524–L544 form a helical membrane-spanning segment. At S545–L553 the chain is on the lumenal side. The helical transmembrane segment at R554–F574 threads the bilayer. Residues R575–P602 lie on the Cytoplasmic side of the membrane. The chain crosses the membrane as a helical span at residues L603–F623. Over T624–D635 the chain is Lumenal. A helical membrane pass occupies residues V636 to Q656. The Cytoplasmic segment spans residues D657–L758. The RING-type; atypical zinc-finger motif lies at C699 to R752.

In terms of assembly, component of the DSC E3 ligase complexes composed of at least TUL1, DSC2, DSC3, UBX3, CDC48 as well as VLD1 for the vacuole-localized complex or GLD1 for the Golgi/endosome-localized complex. Interacts with UBC4.

It localises to the golgi apparatus membrane. The enzyme catalyses S-ubiquitinyl-[E2 ubiquitin-conjugating enzyme]-L-cysteine + [acceptor protein]-L-lysine = [E2 ubiquitin-conjugating enzyme]-L-cysteine + N(6)-ubiquitinyl-[acceptor protein]-L-lysine.. It participates in protein modification; protein ubiquitination. Its function is as follows. Catalytic component of the DSC E3 ubiquitin ligase complexes that tag proteins present in Golgi, endosome and vacuole membranes and function in protein homeostasis under non-stress conditions and support a role in protein quality control. Mediates ubiquitination of vacuolar proteins such as CPS1, PPN1, PEP12 and other proteins containing exposed hydrophilic residues within their transmembrane domains, leading to their sorting into internal vesicles in late endosomes. Targets also the unpalmitoylated endosomal SNARE TLG1 to the MVB pathway. The protein is Transmembrane E3 ubiquitin-protein ligase 1 (TUL1) of Saccharomyces cerevisiae (strain ATCC 204508 / S288c) (Baker's yeast).